Here is a 349-residue protein sequence, read N- to C-terminus: Galactose-1-phosphate uridylyltransferase (349 aa).

29–32 (RAKR) is a binding site for UDP-alpha-D-glucose. Zn(2+) contacts are provided by C53 and C56. 78-79 (ND) contacts UDP-alpha-D-glucose. Zn(2+) is bound at residue H116. UDP-alpha-D-glucose is bound by residues N154 and 160–162 (GCS). H165 contributes to the Zn(2+) binding site. The Tele-UMP-histidine intermediate role is filled by H167. Q169 is a UDP-alpha-D-glucose binding site. Fe cation-binding residues include E183, H282, H297, and H299. UDP-alpha-D-glucose-binding positions include 312-313 (KF), 317-318 (YE), and Q324.

It belongs to the galactose-1-phosphate uridylyltransferase type 1 family. The cofactor is Zn(2+).

It carries out the reaction alpha-D-galactose 1-phosphate + UDP-alpha-D-glucose = alpha-D-glucose 1-phosphate + UDP-alpha-D-galactose. It functions in the pathway carbohydrate metabolism; galactose metabolism. The protein is Galactose-1-phosphate uridylyltransferase (galT) of Haemophilus influenzae (strain ATCC 51907 / DSM 11121 / KW20 / Rd).